Reading from the N-terminus, the 275-residue chain is Large ribosomal subunit protein uL2 (275 aa).

Disordered stretches follow at residues 36-55 (PKKR…RHKG) and 223-275 (VVMN…RHAR).

Belongs to the universal ribosomal protein uL2 family. In terms of assembly, part of the 50S ribosomal subunit. Forms a bridge to the 30S subunit in the 70S ribosome.

Its function is as follows. One of the primary rRNA binding proteins. Required for association of the 30S and 50S subunits to form the 70S ribosome, for tRNA binding and peptide bond formation. It has been suggested to have peptidyltransferase activity; this is somewhat controversial. Makes several contacts with the 16S rRNA in the 70S ribosome. The protein is Large ribosomal subunit protein uL2 of Thiobacillus denitrificans (strain ATCC 25259 / T1).